Reading from the N-terminus, the 99-residue chain is Protein Tat (99 aa).

Residues 1-20 (MEPVDPNIEPWNQPGSQPKT) form a disordered region. Residues 1 to 24 (MEPVDPNIEPWNQPGSQPKTACNQ) form an interaction with human CREBBP region. The interval 1 to 48 (MEPVDPNIEPWNQPGSQPKTACNQCYCKKCCYHCQLCFLQKGLGICYG) is transactivation. Residues cysteine 22, cysteine 25, and cysteine 27 each contribute to the Zn(2+) site. The segment at 22–37 (CNQCYCKKCCYHCQLC) is cysteine-rich. At lysine 28 the chain carries N6-acetyllysine; by host PCAF. 4 residues coordinate Zn(2+): cysteine 30, histidine 33, cysteine 34, and cysteine 37. The tract at residues 38–48 (FLQKGLGICYG) is core. The Nuclear localization signal, RNA-binding (TAR), and protein transduction signature appears at 49 to 57 (REKRRQRTT). The interaction with the host capping enzyme RNGTT stretch occupies residues 49-86 (REKRRQRTTTPYASKNHKDPIPKQPLPQARGDPTGPKE). Position 51 is an N6-acetyllysine; by host EP300 and GCN5L2 (lysine 51). Asymmetric dimethylarginine; by host PRMT6 is present on residues arginine 52 and arginine 53. The tract at residues 54-99 (QRTTTPYASKNHKDPIPKQPLPQARGDPTGPKESKKEVESKTKTDP) is disordered. Lysine 71 participates in a covalent cross-link: Glycyl lysine isopeptide (Lys-Gly) (interchain with G-Cter in ubiquitin). The Cell attachment site signature appears at 78-80 (RGD). Basic and acidic residues predominate over residues 83-99 (GPKESKKEVESKTKTDP).

It belongs to the lentiviruses Tat family. Interacts with host CCNT1. Associates with the P-TEFb complex composed at least of Tat, P-TEFb (CDK9 and CCNT1), TAR RNA, RNA Pol II. Recruits the HATs CREBBP, TAF1/TFIID, EP300, PCAF and GCN5L2. Interacts with host KAT5/Tip60; this interaction targets the latter to degradation. Interacts with the host deacetylase SIRT1. Interacts with host capping enzyme RNGTT; this interaction stimulates RNGTT. Binds to host KDR, and to the host integrins ITGAV/ITGB3 and ITGA5/ITGB1. Interacts with host KPNB1/importin beta-1 without previous binding to KPNA1/importin alpha-1. Interacts with EIF2AK2. Interacts with host nucleosome assembly protein NAP1L1; this interaction may be required for the transport of Tat within the nucleus, since the two proteins interact at the nuclear rim. Interacts with host C1QBP/SF2P32; this interaction involves lysine-acetylated Tat. Interacts with the host chemokine receptors CCR2, CCR3 and CXCR4. Interacts with host DPP4/CD26; this interaction may trigger an anti-proliferative effect. Interacts with host LDLR. Interacts with the host extracellular matrix metalloproteinase MMP1. Interacts with host PRMT6; this interaction mediates Tat's methylation. Interacts with, and is ubiquitinated by MDM2/Hdm2. Interacts with host PSMC3 and HTATIP2. Interacts with STAB1; this interaction may overcome SATB1-mediated repression of IL2 and IL2RA (interleukin) in T cells by binding to the same domain than HDAC1. Interacts (when acetylated) with human CDK13, thereby increasing HIV-1 mRNA splicing and promoting the production of the doubly spliced HIV-1 protein Nef. Interacts with host TBP; this interaction modulates the activity of transcriptional pre-initiation complex. Interacts with host RELA. Interacts with host PLSCR1; this interaction negatively regulates Tat transactivation activity by altering its subcellular distribution. In terms of processing, asymmetrical arginine methylation by host PRMT6 seems to diminish the transactivation capacity of Tat and affects the interaction with host CCNT1. Acetylation by EP300, CREBBP, GCN5L2/GCN5 and PCAF regulates the transactivation activity of Tat. EP300-mediated acetylation of Lys-50 promotes dissociation of Tat from the TAR RNA through the competitive binding to PCAF's bromodomain. In addition, the non-acetylated Tat's N-terminus can also interact with PCAF. PCAF-mediated acetylation of Lys-28 enhances Tat's binding to CCNT1. Lys-50 is deacetylated by SIRT1. Post-translationally, polyubiquitination by host MDM2 does not target Tat to degradation, but activates its transactivation function and fosters interaction with CCNT1 and TAR RNA. In terms of processing, phosphorylated by EIF2AK2 on serine and threonine residues adjacent to the basic region important for TAR RNA binding and function. Phosphorylation of Tat by EIF2AK2 is dependent on the prior activation of EIF2AK2 by dsRNA.

It localises to the host nucleus. It is found in the host nucleolus. The protein localises to the host cytoplasm. Its subcellular location is the secreted. Its function is as follows. Transcriptional activator that increases RNA Pol II processivity, thereby increasing the level of full-length viral transcripts. Recognizes a hairpin structure at the 5'-LTR of the nascent viral mRNAs referred to as the transactivation responsive RNA element (TAR) and recruits the cyclin T1-CDK9 complex (P-TEFb complex) that will in turn hyperphosphorylate the RNA polymerase II to allow efficient elongation. The CDK9 component of P-TEFb and other Tat-activated kinases hyperphosphorylate the C-terminus of RNA Pol II that becomes stabilized and much more processive. Other factors such as HTATSF1/Tat-SF1, SUPT5H/SPT5, and HTATIP2 are also important for Tat's function. Besides its effect on RNA Pol II processivity, Tat induces chromatin remodeling of proviral genes by recruiting the histone acetyltransferases (HATs) CREBBP, EP300 and PCAF to the chromatin. This also contributes to the increase in proviral transcription rate, especially when the provirus integrates in transcriptionally silent region of the host genome. To ensure maximal activation of the LTR, Tat mediates nuclear translocation of NF-kappa-B by interacting with host RELA. Through its interaction with host TBP, Tat may also modulate transcription initiation. Tat can reactivate a latently infected cell by penetrating in it and transactivating its LTR promoter. In the cytoplasm, Tat is thought to act as a translational activator of HIV-1 mRNAs. In terms of biological role, extracellular circulating Tat can be endocytosed by surrounding uninfected cells via the binding to several surface receptors such as CD26, CXCR4, heparan sulfate proteoglycans (HSPG) or LDLR. Neurons are rarely infected, but they internalize Tat via their LDLR. Through its interaction with nuclear HATs, Tat is potentially able to control the acetylation-dependent cellular gene expression. Modulates the expression of many cellular genes involved in cell survival, proliferation or in coding for cytokines or cytokine receptors. Tat plays a role in T-cell and neurons apoptosis. Tat induced neurotoxicity and apoptosis probably contribute to neuroAIDS. Circulating Tat also acts as a chemokine-like and/or growth factor-like molecule that binds to specific receptors on the surface of the cells, affecting many cellular pathways. In the vascular system, Tat binds to ITGAV/ITGB3 and ITGA5/ITGB1 integrins dimers at the surface of endothelial cells and competes with bFGF for heparin-binding sites, leading to an excess of soluble bFGF. The chain is Protein Tat from Homo sapiens (Human).